Consider the following 92-residue polypeptide: Small ribosomal subunit protein uS19c (92 aa).

The protein belongs to the universal ribosomal protein uS19 family.

It is found in the plastid. The protein localises to the chloroplast. Functionally, protein S19 forms a complex with S13 that binds strongly to the 16S ribosomal RNA. The polypeptide is Small ribosomal subunit protein uS19c (Nymphaea alba (White water-lily)).